The following is a 344-amino-acid chain: GTPase Obg (344 aa).

The region spanning 1–159 is the Obg domain; it reads MKFLDEAKVY…MWLILRLKLI (159 aa). The region spanning 160-327 is the OBG-type G domain; that stretch reads ADAGLVGLPN…ALRAIQAQLD (168 aa). GTP is bound by residues 166–173, 191–195, 212–215, 279–282, and 308–310; these read GLPNAGKS, FTTLH, DIPG, SKAD, and SAA. The Mg(2+) site is built by S173 and T193.

The protein belongs to the TRAFAC class OBG-HflX-like GTPase superfamily. OBG GTPase family. In terms of assembly, monomer. The cofactor is Mg(2+).

It is found in the cytoplasm. In terms of biological role, an essential GTPase which binds GTP, GDP and possibly (p)ppGpp with moderate affinity, with high nucleotide exchange rates and a fairly low GTP hydrolysis rate. Plays a role in control of the cell cycle, stress response, ribosome biogenesis and in those bacteria that undergo differentiation, in morphogenesis control. This chain is GTPase Obg, found in Methylorubrum extorquens (strain CM4 / NCIMB 13688) (Methylobacterium extorquens).